The chain runs to 545 residues: Glutamyl-tRNA(Gln) amidotransferase subunit B-1, chloroplastic/mitochondrial (545 aa).

It belongs to the GatB/GatE family. GatB subfamily. In terms of assembly, subunit of the heterotrimeric GatCAB amidotransferase (AdT) complex, composed of A, B and C subunits.

It localises to the mitochondrion. Its subcellular location is the plastid. The protein resides in the chloroplast. The enzyme catalyses L-glutamyl-tRNA(Gln) + L-glutamine + ATP + H2O = L-glutaminyl-tRNA(Gln) + L-glutamate + ADP + phosphate + H(+). Functionally, allows the formation of correctly charged Gln-tRNA(Gln) through the transamidation of misacylated Glu-tRNA(Gln) in chloroplasts and mitochondria. The reaction takes place in the presence of glutamine and ATP through an activated gamma-phospho-Glu-tRNA(Gln). This chain is Glutamyl-tRNA(Gln) amidotransferase subunit B-1, chloroplastic/mitochondrial, found in Micromonas pusilla (strain CCMP1545) (Picoplanktonic green alga).